The following is a 399-amino-acid chain: MAKEKFSRNKPHVNIGTIGHVDHGKTTLTAAISAVLSRRGLAELKDYDNIDNAPEEKERGITIATSHIEYETDNRHYAHVDCPGHADYVKNMITGAAQMDGAILVVSAADGPMPQTREHILLSRQVGVPYIVVFMNKADMVDDAELLELVEMEIRELLSSYDFPGDDTPIISGSALKALEEAKAGQDGEWSAKIMDLMAAVDSYIPTPTRDTEKDFLMPIEDVFSISGRGTVVTGRIEKGVVKVGDTIEIVGIKDTQTTTVTGVEMFRKEMDQGEAGDNVGVLLRGTKKEEVIRGMVLAKPKSITPHTDFEAEVYILNKDEGGRHTPFFNNYRPQFYVRTTDVTGSIKLADGVEMVMPGENVRITVSLIAPVALEEGTRFAIREGGKTVGSGVVSKIIK.

The 200-residue stretch at 10-209 folds into the tr-type G domain; it reads KPHVNIGTIG…AVDSYIPTPT (200 aa). The interval 19–26 is G1; sequence GHVDHGKT. 19 to 26 serves as a coordination point for GTP; that stretch reads GHVDHGKT. Thr-26 serves as a coordination point for Mg(2+). The tract at residues 60 to 64 is G2; the sequence is GITIA. The segment at 81 to 84 is G3; sequence DCPG. Residues 81-85 and 136-139 each bind GTP; these read DCPGH and NKAD. Positions 136–139 are G4; sequence NKAD. The G5 stretch occupies residues 174–176; the sequence is SAL.

This sequence belongs to the TRAFAC class translation factor GTPase superfamily. Classic translation factor GTPase family. EF-Tu/EF-1A subfamily. Monomer.

Its subcellular location is the cytoplasm. The catalysed reaction is GTP + H2O = GDP + phosphate + H(+). Functionally, GTP hydrolase that promotes the GTP-dependent binding of aminoacyl-tRNA to the A-site of ribosomes during protein biosynthesis. This chain is Elongation factor Tu, found in Campylobacter jejuni (strain RM1221).